Consider the following 391-residue polypeptide: S-adenosylmethionine synthase (391 aa).

An ATP-binding site is contributed by histidine 14. Mg(2+) is bound at residue aspartate 16. K(+) is bound at residue glutamate 42. Residues glutamate 55 and glutamine 98 each coordinate L-methionine. The flexible loop stretch occupies residues 98-108 (QSPDIAMGVDE). ATP contacts are provided by residues 172–174 (DGK), 238–239 (RF), aspartate 247, 253–254 (RK), alanine 270, and lysine 274. Aspartate 247 is a binding site for L-methionine. Lysine 278 is an L-methionine binding site.

It belongs to the AdoMet synthase family. Homotetramer; dimer of dimers. It depends on Mg(2+) as a cofactor. K(+) is required as a cofactor.

The protein localises to the cytoplasm. It carries out the reaction L-methionine + ATP + H2O = S-adenosyl-L-methionine + phosphate + diphosphate. It functions in the pathway amino-acid biosynthesis; S-adenosyl-L-methionine biosynthesis; S-adenosyl-L-methionine from L-methionine: step 1/1. Its function is as follows. Catalyzes the formation of S-adenosylmethionine (AdoMet) from methionine and ATP. The overall synthetic reaction is composed of two sequential steps, AdoMet formation and the subsequent tripolyphosphate hydrolysis which occurs prior to release of AdoMet from the enzyme. The sequence is that of S-adenosylmethionine synthase from Clostridium tetani (strain Massachusetts / E88).